The primary structure comprises 305 residues: Phosphopantetheine adenylyltransferase (305 aa).

Belongs to the eukaryotic CoaD family.

It is found in the cytoplasm. The protein resides in the nucleus. The enzyme catalyses (R)-4'-phosphopantetheine + ATP + H(+) = 3'-dephospho-CoA + diphosphate. In terms of biological role, reversibly transfers an adenylyl group from ATP to 4'-phosphopantetheine, yielding dephospho-CoA (dPCoA) and pyrophosphate. Plays a role in the physiological regulation of the intracellular CoA concentration. The sequence is that of Phosphopantetheine adenylyltransferase (CAB4) from Saccharomyces cerevisiae (strain ATCC 204508 / S288c) (Baker's yeast).